We begin with the raw amino-acid sequence, 45 residues long: Photosystem II reaction center protein K (45 aa).

Positions 1–8 (MFSINFLG) are excised as a propeptide. Residues 17 to 37 (FDPIVDVLPIIPLLFLLLAFV) form a helical membrane-spanning segment.

The protein belongs to the PsbK family. As to quaternary structure, PSII is composed of 1 copy each of membrane proteins PsbA, PsbB, PsbC, PsbD, PsbE, PsbF, PsbH, PsbI, PsbJ, PsbK, PsbL, PsbM, PsbT, PsbY, PsbZ, Psb30/Ycf12, at least 3 peripheral proteins of the oxygen-evolving complex and a large number of cofactors. It forms dimeric complexes.

It localises to the plastid. Its subcellular location is the chloroplast thylakoid membrane. One of the components of the core complex of photosystem II (PSII). PSII is a light-driven water:plastoquinone oxidoreductase that uses light energy to abstract electrons from H(2)O, generating O(2) and a proton gradient subsequently used for ATP formation. It consists of a core antenna complex that captures photons, and an electron transfer chain that converts photonic excitation into a charge separation. In Euglena viridis (Cercaria viridis), this protein is Photosystem II reaction center protein K.